A 92-amino-acid polypeptide reads, in one-letter code: RNA-binding protein Hfq (92 aa).

A Sm domain is found at 9–68; the sequence is DPFLNALRRERVPVSIYLVNGIKLQGQVESFDQFVILLKNTVSQMVYKHAISTVVPSRPF.

This sequence belongs to the Hfq family. As to quaternary structure, homohexamer.

RNA chaperone that binds small regulatory RNA (sRNAs) and mRNAs to facilitate mRNA translational regulation in response to envelope stress, environmental stress and changes in metabolite concentrations. Also binds with high specificity to tRNAs. The protein is RNA-binding protein Hfq of Shewanella halifaxensis (strain HAW-EB4).